A 682-amino-acid polypeptide reads, in one-letter code: Methionine--tRNA ligase (682 aa).

The 'HIGH' region motif lies at 15–25; the sequence is PYANGAIHLGH. Residues cysteine 146, cysteine 149, cysteine 159, and cysteine 162 each coordinate Zn(2+). The short motif at 331–335 is the 'KMSKS' region element; that stretch reads KMSKS. Residue lysine 334 coordinates ATP. The region spanning 580-682 is the tRNA-binding domain; that stretch reads DFAKLDLRVA…QGVKPGMQVK (103 aa).

The protein belongs to the class-I aminoacyl-tRNA synthetase family. MetG type 1 subfamily. In terms of assembly, homodimer. Requires Zn(2+) as cofactor.

The protein localises to the cytoplasm. The enzyme catalyses tRNA(Met) + L-methionine + ATP = L-methionyl-tRNA(Met) + AMP + diphosphate. Functionally, is required not only for elongation of protein synthesis but also for the initiation of all mRNA translation through initiator tRNA(fMet) aminoacylation. The protein is Methionine--tRNA ligase of Pasteurella multocida (strain Pm70).